The sequence spans 214 residues: Glycerol-3-phosphate acyltransferase (214 aa).

5 helical membrane-spanning segments follow: residues 4–24 (LIVA…IVSA), 52–72 (AAIL…WFVV), 82–102 (DTSV…PAFF), 118–138 (LAIN…VAFF), and 159–179 (FLFG…LLVW).

This sequence belongs to the PlsY family. As to quaternary structure, probably interacts with PlsX.

It is found in the cell inner membrane. It catalyses the reaction an acyl phosphate + sn-glycerol 3-phosphate = a 1-acyl-sn-glycero-3-phosphate + phosphate. It participates in lipid metabolism; phospholipid metabolism. Its function is as follows. Catalyzes the transfer of an acyl group from acyl-phosphate (acyl-PO(4)) to glycerol-3-phosphate (G3P) to form lysophosphatidic acid (LPA). This enzyme utilizes acyl-phosphate as fatty acyl donor, but not acyl-CoA or acyl-ACP. This Paraburkholderia xenovorans (strain LB400) protein is Glycerol-3-phosphate acyltransferase.